Reading from the N-terminus, the 488-residue chain is Ammonium transporter Rh type C-like 2 (488 aa).

Residues 1–21 are Cytoplasmic-facing; sequence MGNCFGSRGICDRPKNTNIRL. The chain crosses the membrane as a helical span at residues 22-42; that stretch reads SLPAVCFVWQVSMIILFGVFV. The Extracellular portion of the chain corresponds to 43 to 73; the sequence is RYNEEADTNWVYTKKEKNITSDIENDFYFRY. N60 is a glycosylation site (N-linked (GlcNAc...) asparagine). Residues 74-94 form a helical membrane-spanning segment; sequence PSFQDVHVMIFVGFGFLMTFL. At 95-98 the chain is on the cytoplasmic side; the sequence is KRYS. A helical membrane pass occupies residues 99 to 119; sequence FGAVGFNFLIAAFGLQWALLM. At 120–139 the chain is on the extracellular side; sequence QGWFSPLGDDGKIKIGIENL. Residues 140-160 traverse the membrane as a helical segment; the sequence is INADFCVASCLIAYGAVLGKV. The Cytoplasmic portion of the chain corresponds to 161–162; the sequence is SP. The helical transmembrane segment at 163 to 183 threads the bilayer; it reads VQLLVMTLFGITLYAVEEFII. Topologically, residues 184-191 are extracellular; that stretch reads LRVLNAKD. The chain crosses the membrane as a helical span at residues 192 to 214; sequence AGGSMVIHTFGAYYGLSISRVLY. Over 215–232 the chain is Cytoplasmic; sequence RPNLNKSKHMNGSVYHSD. The chain crosses the membrane as a helical span at residues 233–253; it reads VFAMIGTLFLWMFWPSFNSAI. Residues 254 to 264 lie on the Extracellular side of the membrane; that stretch reads CNHGDGQHRAA. A helical membrane pass occupies residues 265 to 285; sequence INTYLALASTVLTTVAISSMF. Topologically, residues 286–298 are cytoplasmic; that stretch reads EKTGKLDMVHIQN. A helical membrane pass occupies residues 299-319; sequence STLAGGVAVGTAAEFMLMPYG. Residue S320 is a topological domain, extracellular. A helical transmembrane segment spans residues 321–341; that stretch reads LIVGFFCGIISTLGYIYLTPF. Residues 342–356 lie on the Cytoplasmic side of the membrane; it reads LEERLKIQDTCGIHN. Residues 357 to 377 form a helical membrane-spanning segment; the sequence is LHAMPGVIGGIVGAISAAAAS. The Extracellular portion of the chain corresponds to 378–409; that stretch reads KEVYGDLGLKNIFSIEGSNVTRLPTVQGGYQA. Residues 410-430 form a helical membrane-spanning segment; the sequence is AALCVALCFGIGGGTFVGLVL. The Cytoplasmic portion of the chain corresponds to 431–488; that stretch reads KLPIWGDPADEHCFNDEMYWEVPEDEESIIPPVLSYNNHMIPNNKHEEMRETNFAEQS.

The protein belongs to the ammonium transporter (TC 2.A.49) family. Rh subfamily. Homotrimer. As to expression, at larval stages, expressed only in the yolk sac and gill. However, the kidney and the gills are major sites of expression in adults.

Its subcellular location is the apical cell membrane. Functions as an ammonia transporter. May play a role in the elimination of ammonia in the gill. The protein is Ammonium transporter Rh type C-like 2 (rhcgl2) of Danio rerio (Zebrafish).